Consider the following 681-residue polypeptide: DNA ligase (681 aa).

NAD(+)-binding positions include 35-39, 84-85, and E121; these read DAEYD and SI. K123 serves as the catalytic N6-AMP-lysine intermediate. 4 residues coordinate NAD(+): R144, E180, K300, and K324. Zn(2+) is bound by residues C418, C421, C436, and C442. In terms of domain architecture, BRCT spans 601–681; sequence AADGPASGKT…GLRRLLEQPA (81 aa).

This sequence belongs to the NAD-dependent DNA ligase family. LigA subfamily. Mg(2+) serves as cofactor. Requires Mn(2+) as cofactor.

The enzyme catalyses NAD(+) + (deoxyribonucleotide)n-3'-hydroxyl + 5'-phospho-(deoxyribonucleotide)m = (deoxyribonucleotide)n+m + AMP + beta-nicotinamide D-nucleotide.. Functionally, DNA ligase that catalyzes the formation of phosphodiester linkages between 5'-phosphoryl and 3'-hydroxyl groups in double-stranded DNA using NAD as a coenzyme and as the energy source for the reaction. It is essential for DNA replication and repair of damaged DNA. This chain is DNA ligase, found in Aromatoleum aromaticum (strain DSM 19018 / LMG 30748 / EbN1) (Azoarcus sp. (strain EbN1)).